Here is a 123-residue protein sequence, read N- to C-terminus: Small ribosomal subunit protein uS12 (123 aa).

The disordered stretch occupies residues 1 to 47 (MPTINQLVRKGRKKAEKKQSTPALKGGPQKRGVCTRVYTSTPKKPNS). Residue aspartate 89 is modified to 3-methylthioaspartic acid.

This sequence belongs to the universal ribosomal protein uS12 family. As to quaternary structure, part of the 30S ribosomal subunit. Contacts proteins S8 and S17. May interact with IF1 in the 30S initiation complex.

In terms of biological role, with S4 and S5 plays an important role in translational accuracy. Interacts with and stabilizes bases of the 16S rRNA that are involved in tRNA selection in the A site and with the mRNA backbone. Located at the interface of the 30S and 50S subunits, it traverses the body of the 30S subunit contacting proteins on the other side and probably holding the rRNA structure together. The combined cluster of proteins S8, S12 and S17 appears to hold together the shoulder and platform of the 30S subunit. The sequence is that of Small ribosomal subunit protein uS12 from Desulforapulum autotrophicum (strain ATCC 43914 / DSM 3382 / VKM B-1955 / HRM2) (Desulfobacterium autotrophicum).